The sequence spans 549 residues: Leiomodin-2 (549 aa).

Residues 1-42 (MSTFGYRRGLSKYESIDEDELLASLTAEELKELERELEDIEP) are tropomyosin-binding. The segment at 1-47 (MSTFGYRRGLSKYESIDEDELLASLTAEELKELERELEDIEPDRNLP) is interaction with tropomyosin alpha. Interaction with actin stretches follow at residues 1–164 (MSTF…PDNS), 165–499 (KPKT…KEIK), and 523–542 (AHENLMEAIRGSSIRQLRRV). Residues S11, S15, and S24 each carry the phosphoserine modification. Disordered regions lie at residues 91–166 (KLAE…NSKP), 179–200 (TNGNSGGTQRNTESPAAIHPCG), 358–455 (MDKQ…PGKK), and 469–534 (ESAQ…IRGS). Acidic residues-rich tracts occupy residues 95–105 (EDKEESEEELI) and 113–143 (VSEEVCTEEEEESTEEEEEEEEEDSEEEEVT). Composition is skewed to polar residues over residues 150–163 (INGTVSHNGVNPDN) and 179–192 (TNGNSGGTQRNTES). A compositionally biased stretch (basic and acidic residues) spans 358 to 376 (MDKQRQKRMQEQKQQEGHD). Polar residues predominate over residues 390–401 (TPGSSPYASPRQ). Phosphoserine is present on S406. Pro residues predominate over residues 420–452 (PPSPVAPPPPPPPPPLPPHMLPPPPPPPAPPLP). Residues 457–515 (ITRNIAEVIKQQESAQRALQNGQRKKKGKKVKKQPNNILKEIKNSLRSVQEKKMEESSR) adopt a coiled-coil conformation. Polar residues predominate over residues 469–478 (ESAQRALQNG). Over residues 479–489 (QRKKKGKKVKK) the composition is skewed to basic residues. The span at 496–514 (KEIKNSLRSVQEKKMEESS) shows a compositional bias: basic and acidic residues. A WH2 domain is found at 523-542 (AHENLMEAIRGSSIRQLRRV).

The protein belongs to the tropomodulin family. Can bind at least three actin monomers and thereby provides a nucleus for actin filament formation. Interacts (via N-terminus) with tropomyosin alpha (TPM1) (via N-terminus). May also interact with TPM2 (via N-terminus). Interacts with FLII.

The protein resides in the cytoplasm. Its subcellular location is the myofibril. The protein localises to the sarcomere. It localises to the m line. It is found in the cytoskeleton. Its function is as follows. Mediates nucleation of actin filaments and thereby promotes actin polymerization. Plays a role in the regulation of actin filament length. Required for normal sarcomere organization in the heart, and for normal heart function. This is Leiomodin-2 (Lmod2) from Rattus norvegicus (Rat).